We begin with the raw amino-acid sequence, 274 residues long: Long chain fatty acid elongase 2 (274 aa).

A run of 7 helical transmembrane segments spans residues 29–49 (MSTF…TIYF), 73–93 (FSLF…GVFM), 115–135 (FWGW…MFLV), 140–160 (PVIF…VVTY), 170–190 (SLAL…VRAL), 201–221 (FITT…GHLV), and 238–258 (VLSI…KFFY).

It belongs to the ELO family. As to expression, expressed in various tissues and parts of the body, including the ventral cord, pharyngeal muscles, uterus, and the tail, and most strongly in intestinal cells.

The protein resides in the membrane. It carries out the reaction hexadecanoyl-CoA + malonyl-CoA + H(+) = 3-oxooctadecanoyl-CoA + CO2 + CoA. It participates in lipid metabolism; fatty acid biosynthesis. Catalyzes the first and rate-limiting reaction of the four reactions that constitute the long-chain fatty acids elongation cycle. Uses malonyl-CoA to add 2 carbons per cycle to the chain of long-chain fatty acids. Condensing enzyme responsible for the elongation of palmitate (hexadecanoate, 16:0), also involved in polyunsaturated fatty acid (PUFA) biosynthesis. This is Long chain fatty acid elongase 2 from Caenorhabditis elegans.